A 72-amino-acid chain; its full sequence is Translation initiation factor IF-1 (72 aa).

The 72-residue stretch at 1 to 72 folds into the S1-like domain; sequence MSKEDVIEVE…TRGRITWRKK (72 aa).

The protein belongs to the IF-1 family. Component of the 30S ribosomal translation pre-initiation complex which assembles on the 30S ribosome in the order IF-2 and IF-3, IF-1 and N-formylmethionyl-tRNA(fMet); mRNA recruitment can occur at any time during PIC assembly.

Its subcellular location is the cytoplasm. Its function is as follows. One of the essential components for the initiation of protein synthesis. Stabilizes the binding of IF-2 and IF-3 on the 30S subunit to which N-formylmethionyl-tRNA(fMet) subsequently binds. Helps modulate mRNA selection, yielding the 30S pre-initiation complex (PIC). Upon addition of the 50S ribosomal subunit IF-1, IF-2 and IF-3 are released leaving the mature 70S translation initiation complex. The protein is Translation initiation factor IF-1 of Alkaliphilus metalliredigens (strain QYMF).